The chain runs to 66 residues: MDWLAKYWWILVIVFLVGVLLNVIKDLKRVDHKKFLANKPELPPHRDFNDKWDDDDDWPKKDQPKK.

Residues leucine 4 to isoleucine 24 form a helical membrane-spanning segment. A disordered region spans residues lysine 39 to lysine 66. Residues leucine 42–lysine 51 show a composition bias toward basic and acidic residues.

This sequence belongs to the UPF0370 family.

The protein resides in the cell membrane. This Escherichia coli O139:H28 (strain E24377A / ETEC) protein is UPF0370 protein YpfN.